A 128-amino-acid chain; its full sequence is Small ribosomal subunit protein uS9 (128 aa).

Residues 106–128 are disordered; the sequence is PRVVERKKPGRPKARKRFQFSKR. Over residues 113–128 the composition is skewed to basic residues; the sequence is KPGRPKARKRFQFSKR.

The protein belongs to the universal ribosomal protein uS9 family.

This Porphyromonas gingivalis (strain ATCC 33277 / DSM 20709 / CIP 103683 / JCM 12257 / NCTC 11834 / 2561) protein is Small ribosomal subunit protein uS9.